A 442-amino-acid chain; its full sequence is SPRY domain-containing protein 3 (442 aa).

In terms of domain architecture, B30.2/SPRY spans 17-204; it reads DLNLHYRFLN…VRLHLNAELG (188 aa). The tract at residues 371–394 is disordered; the sequence is EGEEEEEEEEEEEDGEEIEPEHEG. Residues 372–390 are compositionally biased toward acidic residues; that stretch reads GEEEEEEEEEEEDGEEIEP.

The protein is SPRY domain-containing protein 3 (SPRYD3) of Pongo abelii (Sumatran orangutan).